A 37-amino-acid polypeptide reads, in one-letter code: Large ribosomal subunit protein bL36 (37 aa).

Belongs to the bacterial ribosomal protein bL36 family.

The protein is Large ribosomal subunit protein bL36 of Halalkalibacterium halodurans (strain ATCC BAA-125 / DSM 18197 / FERM 7344 / JCM 9153 / C-125) (Bacillus halodurans).